The sequence spans 423 residues: AP-1 complex subunit mu-2 (423 aa).

Residues 168-421 (KNEVFIDVIE…ITQSGDYQLR (254 aa)) form the MHD domain.

This sequence belongs to the adaptor complexes medium subunit family. As to quaternary structure, adaptor protein complex 1 (AP-1) is a heterotetramer composed of two large adaptins (gamma-type subunit AP1G1 and beta-type subunit AP1B1), a medium adaptin (mu-type subunit AP1M1 or AP1M2) and a small adaptin (sigma-type subunit AP1S1 or AP1S2 or AP1S3). Interacts with P2X4. Post-translationally, phosphorylation of membrane-bound AP1M1/AP1M2 increases its affinity for sorting signals.

The protein resides in the golgi apparatus. It is found in the cytoplasmic vesicle. The protein localises to the clathrin-coated vesicle membrane. Subunit of clathrin-associated adaptor protein complex 1 that plays a role in protein sorting in the trans-Golgi network (TGN) and endosomes. The AP complexes mediate the recruitment of clathrin to membranes and the recognition of sorting signals within the cytosolic tails of transmembrane cargo molecules. The chain is AP-1 complex subunit mu-2 (AP1M2) from Homo sapiens (Human).